The primary structure comprises 804 residues: Ion-translocating oxidoreductase complex subunit C (804 aa).

4Fe-4S ferredoxin-type domains lie at 366 to 397 (SEMG…QQLY) and 407 to 436 (KARA…VQYY). 8 residues coordinate [4Fe-4S] cluster: cysteine 377, cysteine 380, cysteine 383, cysteine 387, cysteine 416, cysteine 419, cysteine 422, and cysteine 426. 2 disordered regions span residues 466–532 (RLER…EVRV) and 567–804 (KAAQ…MQED). Low complexity-rich tracts occupy residues 484–495 (SVASSDAGAIAA), 567–582 (KAAQ…APQQ), 592–619 (AAVA…EAPQ), 629–660 (KAAV…QQSA), 668–693 (AAVA…ATEA), 706–731 (AAVA…ATEA), and 744–769 (AAVA…ATEA).

The protein belongs to the 4Fe4S bacterial-type ferredoxin family. RnfC subfamily. The complex is composed of six subunits: RnfA, RnfB, RnfC, RnfD, RnfE and RnfG. The cofactor is [4Fe-4S] cluster.

It is found in the cell inner membrane. In terms of biological role, part of a membrane-bound complex that couples electron transfer with translocation of ions across the membrane. In Erwinia tasmaniensis (strain DSM 17950 / CFBP 7177 / CIP 109463 / NCPPB 4357 / Et1/99), this protein is Ion-translocating oxidoreductase complex subunit C.